Here is a 148-residue protein sequence, read N- to C-terminus: Deoxyuridine 5'-triphosphate nucleotidohydrolase (148 aa).

Substrate-binding positions include 65–67 (RSG), Asn-78, 82–84 (TID), and Lys-92.

This sequence belongs to the dUTPase family. Mg(2+) serves as cofactor.

It catalyses the reaction dUTP + H2O = dUMP + diphosphate + H(+). It participates in pyrimidine metabolism; dUMP biosynthesis; dUMP from dCTP (dUTP route): step 2/2. This enzyme is involved in nucleotide metabolism: it produces dUMP, the immediate precursor of thymidine nucleotides and it decreases the intracellular concentration of dUTP so that uracil cannot be incorporated into DNA. The sequence is that of Deoxyuridine 5'-triphosphate nucleotidohydrolase from Chlorobium luteolum (strain DSM 273 / BCRC 81028 / 2530) (Pelodictyon luteolum).